The sequence spans 288 residues: Syntaxin-1A (288 aa).

At Met1–Lys265 the chain is on the cytoplasmic side. 3 positions are modified to phosphoserine: Ser14, Ser64, and Ser95. Residues Asp68–Ser109 are a coiled coil. A Phosphoserine; by DAPK1 modification is found at Ser188. A t-SNARE coiled-coil homology domain is found at Leu192 to Ala254. Glycyl lysine isopeptide (Lys-Gly) (interchain with G-Cter in SUMO) cross-links involve residues Lys252, Lys253, and Lys256. The helical; Anchor for type IV membrane protein transmembrane segment at Ile266 to Ile286 threads the bilayer. The Extracellular portion of the chain corresponds to Phe287–Ala288.

This sequence belongs to the syntaxin family. As to quaternary structure, part of the SNARE core complex containing SNAP25, VAMP2 and STX1A; this complex constitutes the basic catalytic machinery of the complex neurotransmitter release apparatus. The SNARE complex interacts with CPLX1. Interacts with STXBP1. The interaction with STXBP1 promotes assembly of the SNARE complex. Interacts (via C-terminus) with KCNB1 (via C-terminus); the interaction increases in a calcium-dependent manner and induces a pore-independent enhancement of exocytosis in neuroendocrine cells, chromaffin cells, pancreatic beta cells and from the soma of dorsal root ganglia (DRG) neurons. Interacts with SYTL4. Interacts with STXBP6. Interacts with PLCL1 (via C2 domain). Interacts with OTOF. Interacts with LGI3. Interacts (via the H3 domain) with SLC6A4 (via the N-terminus); this interaction regulates SLC4A6 channel conductance in thalamocortical neurons. Interacts with SYT6 and SYT8; the interaction is Ca(2+)-dependent. Interacts with VAMP8. Interacts with SNAP23. Interacts with VAPA and SYBU. Interacts with PRRT2. Interacts with SEPT8. Interacts with STXBP5L. Interacts with synaptotagmin-1/SYT1. Interacts with SEPTIN5; in the cerebellar cortex. Interacts with SEPTIN4; in the striatum. Phosphorylated by CK2. Phosphorylation at Ser-188 by DAPK1 significantly decreases its interaction with STXBP1. In terms of processing, sumoylated, sumoylation is required for regulation of synaptic vesicle endocytosis.

Its subcellular location is the cytoplasmic vesicle. It is found in the secretory vesicle. The protein localises to the synaptic vesicle membrane. It localises to the cell membrane. The protein resides in the synapse. Its subcellular location is the synaptosome. Its function is as follows. Plays an essential role in hormone and neurotransmitter calcium-dependent exocytosis and endocytosis. Part of the SNARE (Soluble NSF Attachment Receptor) complex composed of SNAP25, STX1A and VAMP2 which mediates the fusion of synaptic vesicles with the presynaptic plasma membrane. STX1A and SNAP25 are localized on the plasma membrane while VAMP2 resides in synaptic vesicles. The pairing of the three SNAREs from the N-terminal SNARE motifs to the C-terminal anchors leads to the formation of the SNARE complex, which brings membranes into close proximity and results in final fusion. Participates in the calcium-dependent regulation of acrosomal exocytosis in sperm. Also plays an important role in the exocytosis of hormones such as insulin or glucagon-like peptide 1 (GLP-1). The protein is Syntaxin-1A (STX1A) of Pongo abelii (Sumatran orangutan).